A 321-amino-acid chain; its full sequence is MGEWTILERLLEAAVQQHSTMIGRILLTVVVIFRILIVAIVGETVYDDEQTMFVCNTLQPGCNQACYDRAFPISHIRYWVFQIIMVCTPSLCFITYSVHQSAKQRERRYSTVFLALDRDPAESIGGPGGTGGGGSGGSKREDKKLQNAIVNGVLQNTETTSKETEPDCLEVKELAPHPSGLRTAARSKLRRQEGISRFYIIQVVFRNALEIGFLVGQYFLYGFSVPGLYECNRYPCIKEVECYVSRPTEKTVFLVFMFAVSGICVVLNLAELNHLGWRKIKLAVRGAQAKRKSVYEIRNKDLPRVSVPNFGRTQSSDSAYV.

Over 1–19 the chain is Cytoplasmic; sequence MGEWTILERLLEAAVQQHS. Residues 20 to 42 traverse the membrane as a helical segment; that stretch reads TMIGRILLTVVVIFRILIVAIVG. The Extracellular portion of the chain corresponds to 43 to 75; that stretch reads ETVYDDEQTMFVCNTLQPGCNQACYDRAFPISH. The helical transmembrane segment at 76–98 threads the bilayer; it reads IRYWVFQIIMVCTPSLCFITYSV. The Cytoplasmic portion of the chain corresponds to 99–197; it reads HQSAKQRERR…KLRRQEGISR (99 aa). Positions 120 to 141 are disordered; that stretch reads PAESIGGPGGTGGGGSGGSKRE. Over residues 125–137 the composition is skewed to gly residues; the sequence is GGPGGTGGGGSGG. The chain crosses the membrane as a helical span at residues 198–220; sequence FYIIQVVFRNALEIGFLVGQYFL. Over 221-252 the chain is Extracellular; that stretch reads YGFSVPGLYECNRYPCIKEVECYVSRPTEKTV. The helical transmembrane segment at 253–275 threads the bilayer; the sequence is FLVFMFAVSGICVVLNLAELNHL. At 276–321 the chain is on the cytoplasmic side; that stretch reads GWRKIKLAVRGAQAKRKSVYEIRNKDLPRVSVPNFGRTQSSDSAYV.

This sequence belongs to the connexin family. Delta-type subfamily. As to quaternary structure, a connexon is composed of a hexamer of connexins. As to expression, highly expressed in neurons.

It is found in the cell membrane. It localises to the cell junction. Its subcellular location is the gap junction. Its function is as follows. One gap junction consists of a cluster of closely packed pairs of transmembrane channels, the connexons, through which materials of low MW diffuse from one cell to a neighboring cell. The chain is Gap junction delta-2 protein (Gjd2) from Rattus norvegicus (Rat).